We begin with the raw amino-acid sequence, 219 residues long: Adenylate kinase (219 aa).

ATP is bound at residue 13 to 18; the sequence is GAGKGT. The segment at 33–62 is NMP; the sequence is STGDIFRAAIKNETKMGLEAKKYIDAGNLV. AMP contacts are provided by residues T34, R39, 60 to 62, 88 to 91, and Q95; these read NLV and GYPR. An LID region spans residues 129 to 167; it reads GRFICRTCGATYHKLYNKPKVEGTCDVCGGHDFYQRDDD. R130 provides a ligand contact to ATP. Residues C133 and C136 each coordinate Zn(2+). 139-140 contributes to the ATP binding site; the sequence is TY. Residues C153 and C156 each contribute to the Zn(2+) site. Residues R164 and R175 each contribute to the AMP site. R203 contacts ATP.

It belongs to the adenylate kinase family. As to quaternary structure, monomer.

It is found in the cytoplasm. It carries out the reaction AMP + ATP = 2 ADP. Its pathway is purine metabolism; AMP biosynthesis via salvage pathway; AMP from ADP: step 1/1. In terms of biological role, catalyzes the reversible transfer of the terminal phosphate group between ATP and AMP. Plays an important role in cellular energy homeostasis and in adenine nucleotide metabolism. The chain is Adenylate kinase from Lactiplantibacillus plantarum (strain ATCC BAA-793 / NCIMB 8826 / WCFS1) (Lactobacillus plantarum).